The chain runs to 1257 residues: Protein flightless-1 homolog (1257 aa).

16 LRR repeats span residues 6 to 31 (LQFV…VEQM), 32 to 54 (TQMT…LSRC), 56 to 77 (NLEH…LSDL), 78 to 102 (PRLR…IFRM), 103 to 126 (KDLT…EYAK), 128 to 148 (SIVL…VCAN), 149 to 172 (LIDL…IRRL), 174 to 195 (MLQS…QLPS), 197 to 221 (TSLS…LDDM), 222 to 244 (HNLR…LFKL), 246 to 267 (NLRK…EGEW), 268 to 290 (ENLE…VVKL), 292 to 315 (RLTK…IGKL), 316 to 338 (IQLT…ISRC), 339 to 361 (VKLQ…IHLL), and 363 to 384 (DLKV…PNDA). 4 Gelsolin-like repeats span residues 523–600 (MDEA…EEFL), 640–714 (AVEM…PEFW), 759–832 (ELPK…MMFR), and 1168–1243 (EKTV…CRFR).

It belongs to the villin/gelsolin family.

In terms of biological role, may play a key role in embryonic cellularization by interacting with both the cytoskeleton and other cellular components. This Caenorhabditis elegans protein is Protein flightless-1 homolog (fli-1).